Consider the following 358-residue polypeptide: Pseudouridylate synthase RPUSD4, mitochondrial (358 aa).

A mitochondrion-targeting transit peptide spans 1-12 (MRHAREVTFARL).

Belongs to the pseudouridine synthase RluA family.

It localises to the mitochondrion matrix. It is found in the nucleus. Its subcellular location is the cytoplasm. It carries out the reaction uridine in 5S rRNA = pseudouridine in 5S rRNA. The enzyme catalyses a uridine in tRNA = a pseudouridine in tRNA. The catalysed reaction is a uridine in mRNA = a pseudouridine in mRNA. Functionally, catalyzes uridine to pseudouridine isomerization (pseudouridylation) of different mitochondrial RNA substrates. Acts on position 1397 in 16S mitochondrial ribosomal RNA (16S mt-rRNA). This modification is required for the assembly of 16S mt-rRNA into a functional mitochondrial ribosome. Acts on position 39 in mitochondrial tRNA(Phe). Also catalyzes pseudouridylation of mRNAs in nucleus: acts as a regulator of pre-mRNA splicing by mediating pseudouridylation of pre-mRNAs at locations associated with alternatively spliced regions. Pseudouridylation of pre-mRNAs near splice sites directly regulates mRNA splicing and mRNA 3'-end processing. In Danio rerio (Zebrafish), this protein is Pseudouridylate synthase RPUSD4, mitochondrial.